The chain runs to 905 residues: Protein translocase subunit SecA (905 aa).

ATP is bound by residues glutamine 89, 107 to 111 (GEGKT), and aspartate 502. Positions 837 to 885 (EQTDVGDPILNDQNKKNSSTLWTPSQENKFVNPKDRNPSDSTTWGKVGR) are disordered. Residues 852-865 (KNSSTLWTPSQENK) show a composition bias toward polar residues. Residues cysteine 889, cysteine 891, cysteine 900, and histidine 901 each coordinate Zn(2+).

The protein belongs to the SecA family. In terms of assembly, monomer and homodimer. Part of the essential Sec protein translocation apparatus which comprises SecA, SecYEG and auxiliary proteins SecDF-YajC and YidC. The cofactor is Zn(2+).

The protein resides in the cell inner membrane. It is found in the cytoplasm. The catalysed reaction is ATP + H2O + cellular proteinSide 1 = ADP + phosphate + cellular proteinSide 2.. Its function is as follows. Part of the Sec protein translocase complex. Interacts with the SecYEG preprotein conducting channel. Has a central role in coupling the hydrolysis of ATP to the transfer of proteins into and across the cell membrane, serving both as a receptor for the preprotein-SecB complex and as an ATP-driven molecular motor driving the stepwise translocation of polypeptide chains across the membrane. In Bartonella henselae (strain ATCC 49882 / DSM 28221 / CCUG 30454 / Houston 1) (Rochalimaea henselae), this protein is Protein translocase subunit SecA.